The sequence spans 326 residues: Phenylserine dehydratase (326 aa).

As to quaternary structure, monomer. The cofactor is pyridoxal 5'-phosphate.

The catalysed reaction is L-threo-3-phenylserine = 3-phenylpyruvate + NH4(+). Inhibited by phenylhydrazine, hydroxylamine, p-chloromercuribenzoate, and HgCl(2). This is Phenylserine dehydratase from Ralstonia pickettii (Burkholderia pickettii).